The following is a 206-amino-acid chain: Synaptosomal-associated protein 25 (206 aa).

Residues 1-20 are compositionally biased toward basic and acidic residues; that stretch reads MAEDADMRNELEEMQRRADQ. The interval 1 to 25 is disordered; it reads MAEDADMRNELEEMQRRADQLADES. Residues 1–75 form an interaction with CENPF region; it reads MAEDADMRNE…QINKDMKEAE (75 aa). One can recognise a t-SNARE coiled-coil homology 1 domain in the interval 19–81; the sequence is DQLADESLES…KEAEKNSTDL (63 aa). S-palmitoyl cysteine attachment occurs at residues Cys-85, Cys-88, Cys-90, and Cys-92. Residues 111-120 are interaction with ZDHHC17; sequence GVVASQPARV. Phosphothreonine is present on Thr-138. Residues 140-202 enclose the t-SNARE coiled-coil homology 2 domain; it reads DARENEMDEN…DEANQRATKM (63 aa). Ser-154 and Ser-187 each carry phosphoserine.

This sequence belongs to the SNAP-25 family. In terms of assembly, part of the SNARE core complex containing SNAP25, VAMP2 and STX1A; this complex binds CPLX1. Found in a complex containing SYT1, SV2B and syntaxin-1. Found in a ternary complex with STX1A and VAMP8. Interacts with HSC70 and with SYT9, forming a complex with DNAJC5. The interaction with SYT9 is inhibited in presence of calcium. Isoform 1 and isoform 2 interact with BLOC1S6. Interacts with CENPF. Interacts with EQTN. Interacts with HGS. Interacts with KCNB1 (via N-terminus); reduces the voltage-dependent potassium channel KCNB1 activity in pancreatic beta cells. Interacts with OTOF. Interacts with RIMS1. Interacts with SNAPIN. Interacts with STXBP6. Interacts with TRIM9. Interacts with ZDHHC13 (via ANK repeats). Interacts with ZDHHC17 (via ANK repeats). Associates with the BLOC-1 complex. Interacts with PLCL1 (via C2 domain). Interacts with PRRT2; this interaction may impair the formation of the SNARE complex. Interacts with alpha-synuclein/SNCA. Interacts with PRPH2. Interacts with ROM1. Interacts with STX3. In terms of processing, palmitoylated. Cys-85 appears to be the main site, and palmitoylation is required for membrane association.

The protein localises to the cytoplasm. The protein resides in the perinuclear region. It localises to the cell membrane. Its subcellular location is the synapse. It is found in the synaptosome. The protein localises to the photoreceptor inner segment. Functionally, t-SNARE involved in the molecular regulation of neurotransmitter release. May play an important role in the synaptic function of specific neuronal systems. Associates with proteins involved in vesicle docking and membrane fusion. Regulates plasma membrane recycling through its interaction with CENPF. Modulates the gating characteristics of the delayed rectifier voltage-dependent potassium channel KCNB1 in pancreatic beta cells. The polypeptide is Synaptosomal-associated protein 25 (SNAP25) (Pongo abelii (Sumatran orangutan)).